A 404-amino-acid chain; its full sequence is MNPKGRTNLNRSIIGGHDHGSILQLLLFLLLLSSHGGFKFVAGQATHGGSDVSGDSSRFDPTMAILMIVLVSVFFFLGFFSVYIRRCLERVMGMDYGNPNDAGNWLATNRQQARGLDASIIETFPTFQYSTVKTLRIGKEALECSVCLNEFEDDETLRLIPKCCHVFHPGCIDAWLRSHTTCPLCRADLIPVPGESIVSIQIPGLVNDPPGSDPNGDRIRSLGSPDARLIESVALTCNQSMPRRSMSTGWNLAGMFTNSDRTGQHSENLDRFTLRLPQDIHNKLVNPNLSKVHVALPQVMSSTRGYRTGSLGSERNYFYYERFDQDGRLDRRPFSITPPYRTSSINHMSPGGSGGDKVRASSPKSLLLAMRSPFDRLFLGKNNNVGENSSDHLRSCDATPSNTV.

Residues 1–36 (MNPKGRTNLNRSIIGGHDHGSILQLLLFLLLLSSHG) form the signal peptide. The helical transmembrane segment at 64-84 (AILMIVLVSVFFFLGFFSVYI) threads the bilayer. The RING-type; atypical zinc finger occupies 144–186 (CSVCLNEFEDDETLRLIPKCCHVFHPGCIDAWLRSHTTCPLCR). 2 disordered regions span residues 339 to 361 (PYRTSSINHMSPGGSGGDKVRAS) and 385 to 404 (VGENSSDHLRSCDATPSNTV).

This sequence belongs to the RING-type zinc finger family. ATL subfamily.

The protein localises to the membrane. The enzyme catalyses S-ubiquitinyl-[E2 ubiquitin-conjugating enzyme]-L-cysteine + [acceptor protein]-L-lysine = [E2 ubiquitin-conjugating enzyme]-L-cysteine + N(6)-ubiquitinyl-[acceptor protein]-L-lysine.. The protein operates within protein modification; protein ubiquitination. The sequence is that of RING-H2 finger protein ATL11 (ATL11) from Arabidopsis thaliana (Mouse-ear cress).